Consider the following 246-residue polypeptide: High mobility group protein 1 (246 aa).

The segment at residues 106–179 (PKKPLTVFFA…NYQREKSKYL (74 aa)) is a DNA-binding region (HMG box). Positions 179-246 (LEAKKNGTLP…KKKDKSNSSI (68 aa)) are disordered. The span at 214–227 (PVEKRPHDDDGSSE) shows a compositional bias: basic and acidic residues. The segment covering 228–238 (KKKKKKKKDKK) has biased composition (basic residues).

Interacts with FPR1. Interacts with an unidentified DNA helicase. Associates with rDNA.

The protein localises to the nucleus. It localises to the nucleolus. DNA-binding protein that is probably part of the rDNA transcription apparatus. Acts synergetically with the RPA49 subunit of RNA polymerase I during rDNA transcription. May participate in mutagenesis control. The protein is High mobility group protein 1 (HMO1) of Saccharomyces cerevisiae (strain ATCC 204508 / S288c) (Baker's yeast).